A 396-amino-acid polypeptide reads, in one-letter code: N-terminal EF-hand calcium-binding protein 3 (396 aa).

The segment covering 14-34 (PPAPQPQPQTPRHPQLAPDPG) has biased composition (pro residues). Positions 14-36 (PPAPQPQPQTPRHPQLAPDPGPA) are disordered. An EF-hand domain is found at 36-71 (AGHTLFQDVFRRADKNDDGKLSFEEFQNYFADGVLS). Ca(2+) contacts are provided by aspartate 49, asparagine 51, aspartate 53, lysine 55, and glutamate 60. Residues 181–190 (VEAQSRLCGS) are required for interaction with APBA3. The segment at 197–220 (ALRSVSRSSTWSPGSSDTGRSSEA) is disordered. Residues 206–217 (TWSPGSSDTGRS) show a composition bias toward polar residues. The ABM domain occupies 296–385 (LMAQRQVQVA…RAPDTLTTVF (90 aa)).

Interacts with the N-terminal domain of APBA2. Interacts with NEK2. Interacts with APBA3; APBA3 seems to mediate the interaction between NECAB3 and HIF1AN. Post-translationally, phosphorylated by NEK2. Strongly expressed in heart and skeletal muscle, moderately in brain and pancreas.

The protein resides in the golgi apparatus. In terms of biological role, inhibits the interaction of APBA2 with amyloid-beta precursor protein (APP), and hence allows formation of amyloid-beta. May enhance the activity of HIF1A and thus promote glycolysis under normoxic conditions; the function requires its ABM domain and may implicate the stabilization of the interaction between HIF1AN and APBA3. In Homo sapiens (Human), this protein is N-terminal EF-hand calcium-binding protein 3 (NECAB3).